The chain runs to 643 residues: Macrolide export ATP-binding/permease protein MacB (643 aa).

The region spanning 6-244 (IELKGVSRVF…QVRSPFGVRH (239 aa)) is the ABC transporter domain. 42–49 (GASGSGKS) contributes to the ATP binding site. 4 helical membrane passes run 270-290 (VLTLLGIVIGVASVIVMLAIG), 518-538 (LTILLGSIAAISLLVGGIGVM), 569-589 (FLIEAVVVSALGGLIGVVIGL), and 606-626 (LMPIVWAFGCAFVTGLLFGYL).

It belongs to the ABC transporter superfamily. Macrolide exporter (TC 3.A.1.122) family. In terms of assembly, homodimer.

It localises to the cell inner membrane. Functionally, non-canonical ABC transporter that contains transmembrane domains (TMD), which form a pore in the inner membrane, and an ATP-binding domain (NBD), which is responsible for energy generation. Confers resistance against macrolides. The chain is Macrolide export ATP-binding/permease protein MacB from Wolinella succinogenes (strain ATCC 29543 / DSM 1740 / CCUG 13145 / JCM 31913 / LMG 7466 / NCTC 11488 / FDC 602W) (Vibrio succinogenes).